The chain runs to 99 residues: Large ribosomal subunit protein eL36 (99 aa).

It belongs to the eukaryotic ribosomal protein eL36 family. In terms of assembly, component of the large ribosomal subunit. Mature ribosomes consist of a small (40S) and a large (60S) subunit. The 40S subunit contains about 32 different proteins and 1 molecule of RNA (18S). The 60S subunit contains 45 different proteins and 3 molecules of RNA (25S, 5.8S and 5S).

Its subcellular location is the cytoplasm. Functionally, component of the ribosome, a large ribonucleoprotein complex responsible for the synthesis of proteins in the cell. The small ribosomal subunit (SSU) binds messenger RNAs (mRNAs) and translates the encoded message by selecting cognate aminoacyl-transfer RNA (tRNA) molecules. The large subunit (LSU) contains the ribosomal catalytic site termed the peptidyl transferase center (PTC), which catalyzes the formation of peptide bonds, thereby polymerizing the amino acids delivered by tRNAs into a polypeptide chain. The nascent polypeptides leave the ribosome through a tunnel in the LSU and interact with protein factors that function in enzymatic processing, targeting, and the membrane insertion of nascent chains at the exit of the ribosomal tunnel. The sequence is that of Large ribosomal subunit protein eL36 from Candida albicans (strain SC5314 / ATCC MYA-2876) (Yeast).